Reading from the N-terminus, the 600-residue chain is MEFKLIAEYFDKLEKISSRLQLTALLTDLFKKADKNVIDKVVYLIQGKLWPDFLGYPELGVGEKLLIKAISIAVNVKEEVVEEQLKVVGDLGEVAMRLKKTPQSASILSFLGAQSNEGLTVEETYESLTKIALASGEGSRDIKIRSLAGLLKKASPLEAKYIVRFVDGRLRVGIGDATIMDALSTAFTGSTSFRPLIERAYNLRADLGNIAKIIAQQGVEALKDIKPQVGIPIRPMLAERMSDPAEILAKVGGEALVDYKYDGERAQIHKKDKEVYIFSRRLENITRMYPDVVEYVREYINANEVIIEGEIVAVDPESNEIRPFQELMHRKRKNDINEAIKEYPVNVYLFDLMLYEDADYTMKPLPERRKKLEEVIKPNDKLHIAHHIYTNNVDKLMEFFYDAISNGAEGVMVKSVAKDSIYQAGSRGFLWIKLKRDYQSEMADSVDLVVVGAFYGRGKRGGKLSSLLMAAYDPETDTFKTVCKVASGFSDAELDELQKKLMEIKLDKKDPRVDSQLEPDIWVEPKYVAEIIGAEITLSPEHTCCKDMVSKGAGLSVRFPRFIRWRDDKSIEDATTPKEIYEMYKMKLRKKEEEQHTDEA.

Aspartate 258 contributes to the ATP binding site. Residue lysine 260 is the N6-AMP-lysine intermediate of the active site. ATP is bound by residues arginine 265, arginine 280, glutamate 310, phenylalanine 350, arginine 427, and lysine 433.

This sequence belongs to the ATP-dependent DNA ligase family. Mg(2+) serves as cofactor.

The catalysed reaction is ATP + (deoxyribonucleotide)n-3'-hydroxyl + 5'-phospho-(deoxyribonucleotide)m = (deoxyribonucleotide)n+m + AMP + diphosphate.. Its activity is regulated as follows. Inhibited by PCNA123 and PCNA323. Functionally, DNA ligase that seals nicks in double-stranded DNA during DNA replication, DNA recombination and DNA repair. The protein is DNA ligase of Sulfurisphaera tokodaii (strain DSM 16993 / JCM 10545 / NBRC 100140 / 7) (Sulfolobus tokodaii).